The following is a 941-amino-acid chain: Lysine-specific demethylase 7A (941 aa).

The PHD-type zinc finger occupies 37-88 (PVYCVCRQPYDVNRFMIECDICKDWFHGSCVGVEEHHAVDIDLYHCPNCAVL). The interval 97–114 (RRNWHRHDYTEIDDGSKP) is linker. One can recognise a JmjC domain in the interval 230 to 386 (FSDTKMSELV…MQLRCYEMEK (157 aa)). Residue Thr-279 participates in substrate binding. Fe cation contacts are provided by His-282 and Asp-284. Lys-299 is a substrate binding site. A Fe cation-binding site is contributed by His-354. 3 disordered regions span residues 597-633 (QSLY…EHEE), 677-700 (TTEE…KEES), and 819-921 (QDLS…MATA). At Ser-604 the chain carries Phosphoserine. 2 stretches are compositionally biased toward basic and acidic residues: residues 618–633 (MKIE…EHEE) and 685–700 (GDEK…KEES). Residues 834–876 (SEISQRVQSRNYVDSSGSSLQNGKYMQNSNLTSGACQISNGSL) are compositionally biased toward polar residues.

The protein belongs to the JHDM1 histone demethylase family. JHDM1D subfamily. Fe(2+) is required as a cofactor.

It localises to the nucleus. The enzyme catalyses N(6),N(6)-dimethyl-L-lysyl(9)-[histone H3] + 2 2-oxoglutarate + 2 O2 = L-lysyl(9)-[histone H3] + 2 formaldehyde + 2 succinate + 2 CO2. The catalysed reaction is N(6),N(6)-dimethyl-L-lysyl(27)-[histone H3] + 2 2-oxoglutarate + 2 O2 = L-lysyl(27)-[histone H3] + 2 formaldehyde + 2 succinate + 2 CO2. It carries out the reaction N(6),N(6)-dimethyl-L-lysyl(36)-[histone H3] + 2-oxoglutarate + O2 = N(6)-methyl-L-lysyl(36)-[histone H3] + formaldehyde + succinate + CO2. It catalyses the reaction N(6)-methyl-L-lysyl(20)-[histone H4] + 2-oxoglutarate + O2 = L-lysyl(20)-[histone H4] + formaldehyde + succinate + CO2. In terms of biological role, histone demethylase required for brain development. Specifically demethylates dimethylated 'Lys-9', 'Lys-27' and 'Lys-36' (H3K9me2, H3K27me2, H3K36me2, respectively) of histone H3 and monomethylated histone H4 'Lys-20' residue (H4K20Me1), thereby playing a central role in histone code. Specifically binds trimethylated 'Lys-4' of histone H3 (H3K4me3), affecting histone demethylase specificity: in presence of H3K4me3, it has no demethylase activity toward H3K9me2, while it has high activity toward H3K27me2. Demethylates H3K9me2 in absence of H3K4me3. Has activity toward H4K20Me1 only when nucleosome is used as a substrate and when not histone octamer is used as substrate. This is Lysine-specific demethylase 7A (KDM7A) from Homo sapiens (Human).